Consider the following 1348-residue polypeptide: ABC multidrug transporter atrD (1348 aa).

The segment covering 1 to 10 has biased composition (polar residues); that stretch reads MSPLETNPLS. The segment at 1–67 is disordered; it reads MSPLETNPLS…HRPKSSSSNN (67 aa). The span at 20 to 31 shows a compositional bias: low complexity; it reads ETSTTEEQASTP. N-linked (GlcNAc...) asparagine glycosylation occurs at N99. The next 4 helical transmembrane spans lie at 114–134, 168–188, 240–260, and 268–288; these read ILIM…LPLF, YFVY…VGFI, KVGL…IAYV, and ICSS…QFII. Residues 118 to 408 form the ABC transmembrane type-1 1 domain; the sequence is VISTICAIAA…VSPNAQAFTN (291 aa). N314 carries an N-linked (GlcNAc...) asparagine glycan. The next 2 helical transmembrane spans lie at 344-364 and 371-391; these read IVMG…YGLG and FLVD…AILI. One can recognise an ABC transporter 1 domain in the interval 443-688; sequence IELRNVKHIY…GGAYRKLVEA (246 aa). 478-485 provides a ligand contact to ATP; sequence GPSGSGKS. Residue N550 is glycosylated (N-linked (GlcNAc...) asparagine). 2 helical membrane-spanning segments follow: residues 778 to 798 and 825 to 845; these read MLIG…QAVL and LMFF…GAAF. An ABC transmembrane type-1 2 domain is found at 779 to 1068; sequence LIGLVFSVLA…VFSFAPDMGK (290 aa). N-linked (GlcNAc...) asparagine glycosylation is present at N877. 4 helical membrane passes run 892–912, 925–947, 1015–1035, and 1042–1062; these read HLSG…TTLG, LALV…FYML, ALVF…LGHH, and FFVC…VFSF. N1088 is a glycosylation site (N-linked (GlcNAc...) asparagine). An ABC transporter 2 domain is found at 1103 to 1341; sequence IEFRNVHFRY…KGRYYELVNL (239 aa). ATP is bound at residue 1138 to 1145; the sequence is GPSGCGKS.

It belongs to the ABC transporter superfamily. ABCB family. Multidrug resistance exporter (TC 3.A.1.201) subfamily.

Its subcellular location is the cell membrane. Fenamirol efflux transporter activity is inhibited by the cyclosporin derivative PSC 833, nigericin, reserpine and valinomycin. The effect of reserpine is transiant, while that of the cyclosporin derivative PSC 833, nigericin and valinomycin is proportional to the time of exposure. Cyclohexinmide has inhibitory effect only when applied prior to addition of the fungicide. In terms of biological role, pleiotropic ABC efflux transporter involved in the protection of the cells against a wide range of toxic compounds. Confers resistance to the azole fenarimol via efflux transport. May also be involved in the secretion of penicillin. This Emericella nidulans (Aspergillus nidulans) protein is ABC multidrug transporter atrD.